Reading from the N-terminus, the 156-residue chain is Small ribosomal subunit protein uS7 (156 aa).

It belongs to the universal ribosomal protein uS7 family. Part of the 30S ribosomal subunit. Contacts proteins S9 and S11.

One of the primary rRNA binding proteins, it binds directly to 16S rRNA where it nucleates assembly of the head domain of the 30S subunit. Is located at the subunit interface close to the decoding center, probably blocks exit of the E-site tRNA. The polypeptide is Small ribosomal subunit protein uS7 (Tolumonas auensis (strain DSM 9187 / NBRC 110442 / TA 4)).